Reading from the N-terminus, the 523-residue chain is Apolipoprotein N-acyltransferase (523 aa).

Transmembrane regions (helical) follow at residues 26-46 (LRFA…AFAP), 49-66 (WWWL…LVRQ), 74-94 (AWVG…WLYI), 109-129 (AAVL…AWLW), 137-157 (QLSG…SEWL), 185-205 (LVGV…LCAA), and 212-232 (WLAG…HTIA). One can recognise a CN hydrolase domain in the interval 246-487 (LQGNVPQDVK…LGTLQADVQG (242 aa)). E284 acts as the Proton acceptor in catalysis. K345 is a catalytic residue. C395 functions as the Nucleophile in the catalytic mechanism. The chain crosses the membrane as a helical span at residues 494-514 (FVRTGNAPALGAGVLVLLAAL).

The protein belongs to the CN hydrolase family. Apolipoprotein N-acyltransferase subfamily.

The protein localises to the cell inner membrane. The enzyme catalyses N-terminal S-1,2-diacyl-sn-glyceryl-L-cysteinyl-[lipoprotein] + a glycerophospholipid = N-acyl-S-1,2-diacyl-sn-glyceryl-L-cysteinyl-[lipoprotein] + a 2-acyl-sn-glycero-3-phospholipid + H(+). It participates in protein modification; lipoprotein biosynthesis (N-acyl transfer). Functionally, catalyzes the phospholipid dependent N-acylation of the N-terminal cysteine of apolipoprotein, the last step in lipoprotein maturation. The polypeptide is Apolipoprotein N-acyltransferase (Ralstonia nicotianae (strain ATCC BAA-1114 / GMI1000) (Ralstonia solanacearum)).